Here is a 487-residue protein sequence, read N- to C-terminus: Protein SMG9 (487 aa).

Disordered stretches follow at residues 30–83 (EDAA…PPAL) and 136–164 (RDKG…LQPP). Residues 42–70 (LKKDRDREQETWDRERDKDRKLERDREAE) are compositionally biased toward basic and acidic residues.

The protein belongs to the SMG9 family.

Involved in nonsense-mediated decay (NMD) of mRNAs containing premature stop codons. Probable component of kinase complex containing nonC and recruited to stalled ribosomes. The polypeptide is Protein SMG9 (Drosophila melanogaster (Fruit fly)).